The primary structure comprises 209 residues: Glutathione S-transferase 1-1 (209 aa).

One can recognise a GST N-terminal domain in the interval 1-81; sequence MADFYYLPGS…YLVEKYGKTD (81 aa). Glutathione contacts are provided by residues Ser10, 51-53, and 65-67; these read HTI and ESR. The region spanning 87–209 is the GST C-terminal domain; it reads CPKKRAVINQ…GCLEFKKFFE (123 aa).

It belongs to the GST superfamily. Theta family. Homodimer.

It catalyses the reaction RX + glutathione = an S-substituted glutathione + a halide anion + H(+). It carries out the reaction 1,1,1-trichloro-2,2-bis(4-chlorophenyl)ethane = 1,1-dichloro-2,2-bis(4-chlorophenyl)ethylene + chloride + H(+). Functionally, conjugation of reduced glutathione to a wide number of exogenous and endogenous hydrophobic electrophiles. Has DDT dehydrochlorinase activity. The protein is Glutathione S-transferase 1-1 (GstD1) of Drosophila sechellia (Fruit fly).